The following is a 781-amino-acid chain: Cation channel sperm-associated auxiliary subunit delta (781 aa).

The first 20 residues, 1-20, serve as a signal peptide directing secretion; that stretch reads MLVLMLVVATTFRLCPLVKA. The Extracellular portion of the chain corresponds to 21-725; sequence RPLCRIRTLR…YGAFPLSIFP (705 aa). Cystine bridges form between cysteine 24–cysteine 370, cysteine 60–cysteine 146, cysteine 145–cysteine 153, cysteine 388–cysteine 497, cysteine 511–cysteine 705, cysteine 526–cysteine 573, and cysteine 625–cysteine 655. Residues asparagine 231, asparagine 294, asparagine 458, asparagine 473, asparagine 539, and asparagine 631 are each glycosylated (N-linked (GlcNAc...) asparagine). The chain crosses the membrane as a helical span at residues 726 to 749; sequence PEITIVLLTAATLLSIWLAYMIPQ. Residues 750–781 are Cytoplasmic-facing; that stretch reads LLHTEQGLEGNGFWVRLYQRCRKSCACLWGRC.

Belongs to the CATSPERD family. In terms of assembly, component of the CatSper complex or CatSpermasome composed of the core pore-forming members CATSPER1, CATSPER2, CATSPER3 and CATSPER4 as well as auxiliary members CATSPERB, CATSPERG, CATSPERD, CATSPERE, CATSPERZ, C2CD6/CATSPERT, TMEM249, TMEM262 and EFCAB9. HSPA1 may be an additional auxiliary complex member. The core complex members CATSPER1, CATSPER2, CATSPER3 and CATSPER4 form a heterotetrameric channel. The auxiliary CATSPERB, CATSPERG, CATSPERD and CATSPERE subunits form a pavilion-like structure over the pore which stabilizes the complex through interactions with CATSPER4, CATSPER3, CATSPER1 and CATSPER2 respectively. TMEM262/CATSPERH interacts with CATSPERB, further stabilizing the complex. C2CD6/CATSPERT interacts at least with CATSPERD and is required for targeting the CatSper complex in the flagellar membrane.

The protein localises to the cell projection. It localises to the cilium. The protein resides in the flagellum membrane. In terms of biological role, auxiliary component of the CatSper complex, a complex involved in sperm cell hyperactivation. Sperm cell hyperactivation is needed for sperm motility which is essential late in the preparation of sperm for fertilization. Required for CATSPER1 stability before intraflagellar transport and/or incorporation of the CatSper complex channel into the flagellar membrane. In Bos taurus (Bovine), this protein is Cation channel sperm-associated auxiliary subunit delta.